Reading from the N-terminus, the 1057-residue chain is Carbamoyl phosphate synthase large chain (1057 aa).

The carboxyphosphate synthetic domain stretch occupies residues 1–401; the sequence is MPKRNDIKTI…SLLKAIRSLE (401 aa). 12 residues coordinate ATP: Arg129, Arg169, Gly175, Gly176, Lys208, Ile210, Glu215, Gly241, Ile242, His243, Gln284, and Glu298. Residues 133–327 form the ATP-grasp 1 domain; sequence RNLMNELNEP…IAKLAAKIAV (195 aa). Residues Gln284, Glu298, and Asn300 each contribute to the Mg(2+) site. Mn(2+)-binding residues include Gln284, Glu298, and Asn300. The interval 402–546 is oligomerization domain; the sequence is YGVHHLGLPN…YGTYETENES (145 aa). The interval 547 to 929 is carbamoyl phosphate synthetic domain; the sequence is IRSDKKKVVV…ALYKGLVASG (383 aa). The region spanning 671 to 861 is the ATP-grasp 2 domain; sequence EALMQRIEIP…MANLAMKAIL (191 aa). ATP-binding residues include Arg707, Arg746, Leu748, Glu752, Gly777, Val778, His779, Ser780, Gln820, and Glu832. Mg(2+) contacts are provided by Gln820, Glu832, and Asn834. The Mn(2+) site is built by Gln820, Glu832, and Asn834. The MGS-like domain maps to 930–1057; the sequence is LQVKDHGTVL…ESMTFNMNQM (128 aa). Positions 930–1057 are allosteric domain; that stretch reads LQVKDHGTVL…ESMTFNMNQM (128 aa).

The protein belongs to the CarB family. In terms of assembly, composed of two chains; the small (or glutamine) chain promotes the hydrolysis of glutamine to ammonia, which is used by the large (or ammonia) chain to synthesize carbamoyl phosphate. Tetramer of heterodimers (alpha,beta)4. Requires Mg(2+) as cofactor. The cofactor is Mn(2+).

The catalysed reaction is hydrogencarbonate + L-glutamine + 2 ATP + H2O = carbamoyl phosphate + L-glutamate + 2 ADP + phosphate + 2 H(+). It carries out the reaction hydrogencarbonate + NH4(+) + 2 ATP = carbamoyl phosphate + 2 ADP + phosphate + 2 H(+). Its pathway is amino-acid biosynthesis; L-arginine biosynthesis; carbamoyl phosphate from bicarbonate: step 1/1. The protein operates within pyrimidine metabolism; UMP biosynthesis via de novo pathway; (S)-dihydroorotate from bicarbonate: step 1/3. Functionally, large subunit of the glutamine-dependent carbamoyl phosphate synthetase (CPSase). CPSase catalyzes the formation of carbamoyl phosphate from the ammonia moiety of glutamine, carbonate, and phosphate donated by ATP, constituting the first step of 2 biosynthetic pathways, one leading to arginine and/or urea and the other to pyrimidine nucleotides. The large subunit (synthetase) binds the substrates ammonia (free or transferred from glutamine from the small subunit), hydrogencarbonate and ATP and carries out an ATP-coupled ligase reaction, activating hydrogencarbonate by forming carboxy phosphate which reacts with ammonia to form carbamoyl phosphate. In Macrococcus caseolyticus (strain JCSC5402) (Macrococcoides caseolyticum), this protein is Carbamoyl phosphate synthase large chain.